The primary structure comprises 731 residues: Actin filament-associated protein 1 (731 aa).

Position 1 is an N-acetylmethionine (Met1). The tract at residues 46-90 (VKDHAQKAETNNLPAPPQMPLPEIPQPWLPPDSGPPPLPTSSLPE) is disordered. Residues 59–84 (PAPPQMPLPEIPQPWLPPDSGPPPLP) are compositionally biased toward pro residues. The SH3-binding motif lies at 70–73 (PQPW). The SH2-binding 1 motif lies at 93–96 (YEEA). The segment at 118–138 (GSSYESYDEEEEDGKGKKTQH) is disordered. Residues 152–248 (DAKICAFLLR…WLKVIKEAYS (97 aa)) enclose the PH 1 domain. The tract at residues 252 to 318 (GPVDPECSPP…SKSEAKGTVS (67 aa)) is disordered. Over residues 271 to 284 (AELEKKLSSERPSS) the composition is skewed to basic and acidic residues. Ser283 and Ser284 each carry phosphoserine. Residues 348-442 (DVPTCGYLNV…WIGILLAETG (95 aa)) form the PH 2 domain. An SH2-binding 2 motif is present at residues 452 to 457 (YDYIDV). The interval 511–550 (SLKNKKPPASSNGLPVKGRAPSSQQKKVESAGGVKRTASN) is disordered. Position 549 is a phosphoserine (Ser549). Positions 558–649 (KNRVEADAKR…VKESLKKALA (92 aa)) form a coiled coil. Residues 595-638 (DLRAAIEVNAGRKTQVALEDKLKRLEEECKQREAERVSLELELT) are interaction with F-actin. Positions 657–731 (AIEPKSGTSS…AREWELKNGT (75 aa)) are disordered. Ser665, Ser666, and Ser669 each carry phosphoserine. Thr676 is subject to Phosphothreonine. Residues 678–687 (ENSPISSCDT) are compositionally biased toward polar residues. A phosphoserine mark is found at Ser680 and Ser688. Positions 721–731 (KAREWELKNGT) are enriched in basic and acidic residues.

As to quaternary structure, monomer and homomultimer. Interacts via its C-terminus with F-actin; probably involving AFAP1 multimers. Interacts with activated SRC SH3-SH2 domains. Interacts via its PH 1 domain with PRKCA, PRKCB and PRKCI. Post-translationally, phosphorylated on tyrosine residues. Widely expressed with highest levels in brain.

Its subcellular location is the cytoplasm. The protein resides in the cytoskeleton. It localises to the stress fiber. Functionally, can cross-link actin filaments into both network and bundle structures. May modulate changes in actin filament integrity and induce lamellipodia formation. May function as an adapter molecule that links other proteins, such as SRC and PKC to the actin cytoskeleton. The protein is Actin filament-associated protein 1 (Afap1) of Rattus norvegicus (Rat).